Consider the following 185-residue polypeptide: UPF0669 protein C6orf120 homolog (185 aa).

Positions 1-23 are cleaved as a signal peptide; it reads MATPWRCALLMILASQVVILVKC. Asn47 is a glycosylation site (N-linked (GlcNAc...) asparagine).

This sequence belongs to the UPF0669 family.

It localises to the secreted. Its function is as follows. May be involved in induction of apoptosis in CD4(+) T-cells, but not CD8(+) T-cells or hepatocytes. The sequence is that of UPF0669 protein C6orf120 homolog from Rattus norvegicus (Rat).